An 82-amino-acid polypeptide reads, in one-letter code: Turripeptide Gsg9.1 (82 aa).

Positions 1–23 (MMAKLMITVMTVFFLSLQQGADG) are cleaved as a signal peptide. The propeptide occupies 24–46 (LFERWRKNQMAASRIMGNLITAR). Residues proline 49 and proline 50 each carry the 4-hydroxyproline modification. Cystine bridges form between cysteine 53/cysteine 68, cysteine 58/cysteine 72, and cysteine 64/cysteine 79. 4-carboxyglutamate is present on residues glutamate 60 and glutamate 63.

It belongs to the Pg turripeptide superfamily. Expressed by the venom duct.

The protein resides in the secreted. The chain is Turripeptide Gsg9.1 from Gemmula sogodensis (Gem-turris).